Here is a 3019-residue protein sequence, read N- to C-terminus: MSTLPKPQRKTKRNTNRRPMDVKFPGGGQIVGGVYLLPRRGPRLGVRATRKTSERSQPRGRRQPIPKARQPQGRHWAQPGYPWPLYGNEGCGWAGWLLSPRGSRPHWGPNDPRRRSRNLGKVIDTLTCGFADLMGYIPVVGAPLGGVAAALAHGVRAIEDGINYATGNLPGCSFSIFLLALLSCLTTPASALTYGNSSGLYHLTNDCPNSSIVLEADAMILHLPGCLPCVKVGNQSTCWHAVSPTLAIPNASTPATGFRRHVDLLAGAAVVCSSLYIGDLCGSLFLAGQLFTFQPRRHWTVQECNCSIYTGHVTGHRMAWDMMMSWSPTTTLVLSSILRVPEICASVIFGGHWGILLAVAYFGMAGNWLKVLAVLFLFAGVEATTTVGHGVARTTAGITGLFSPGASQNLQLIKNGSSWHINRTALNCNDSLQTGFLASLFYVRKFNSSGCPERMAVCKSLADFRQGWGQITYKVNISGPSDDRPYCWHYAPRPCDVVPASTVCGPVYCFTPSPVVIGTTDRRGNPTYTWGENETDVFMLESLRPPTGGWFGCTWMNSTGFTKTCGAPPCQIIPGDYNSSANELLCPTDCFRKHPEATYQRCGSGPWVTPRCLVDYPYRLWHYPCTVNFTVHKVRMFVGGIEHRFDAACNWTRGERCELHDRDRIEMSPLLFSTTQLAILPCSFSTMPALSTGLIHLHQNIVDVQYLYGVSSSVTSWVVKWEYIVLMFLVLADARICTCLWLMLLISNVEAAVERLVVLNAASAAGTAGWWWAVLFLCCVWYVKGRLVPACTYMALGMWPLLLTILALPHRAYAMDNEQAASLGAVGLLAITIFTITPTYKKLLTCFIWWNQYFLARAEAMVHEWVPDLRVRGGRDSIILLTCLLHPQLGFEVTKILLAILAPLYILQYSLLKVPYFVRAHILLRACLLVRRLAGGRYVQACLLRLGAWTGTFIYDHLAPLSDWASDGLRDLAVAVEPVIFSPMEKKIITWGADTAACGDILSGLPVSARLGNLVLLGPADDMQRGGWKLLAPITAYAQQTRGLVGTIVTSLTGRDKNEVEGEVQVVSTATQSFLATSINGVMWTVYHGAGSKTLAGPKGPVCQMYTNVDKDLVGWPSPPGARSLTPCTCGSSDLYLVTREADVIPARRRGDNRAALLSPRPISTLKGSSGGPVMCPSGHVVGLFRAAVCTRGVAKSLDFIPVENMETTMRSPSFTDNSTPPAVPQTYQVGYLHAPTGSGKSTRVPAAYASQGYKVLVLNPSVAATLSFGSYMRQAYGVEPNVRTGVRTVTTGGAITYSTYGKFLADGGCSGGAYDIIICDECHSTDPTTVLGIGTVLDQAETAGARLTVLATATPPGSITVPHPNITETALPTTGEIPFYGKAIPLEYIKGGRHLIFCHSKKKCDELAGKLKSLGLNAVAFYRGVDVSVIPTSGDVVICATDALMTGYTGDFDSVIDCNVAVTQVVDFSLDPTFSIETTTVPQDAVSRSQRRGRTGRGKPGVYRFVSQGERPSGMFDTVVLCEAYDTGCAWYELTPSETTVRLRAYMNTPGLPVCQDHLEFWEGVFTGLTHIDAHFLSQTKQGGENFAYLVAYQATVCARAKAPPPSWDTMWKCLIRLKPTLTGPTPLLYRLGAVQNEIITTHPITKYIMTCMSADLEVITSTWVLVGGVLAALAAYCLSVGCVVICGRITLTGKPAVVPDREILYQQFDEMEECSRHIPYLAEGQQIAEQFRQKVLGLLQASAKQAEELKPAVHSAWPRMEEFWRKHMWNFVSGIQYLAGLSTLPGNPAVASLMSFTASLTSPLRTSQTLLLNILGGWIAAQVAPPPASTAFVVSGLAGAAVGSIRLGRVLVDVLAGYGAGVSGALVAFKIMSGDCPTTEDMVNLLPALLSPGALVVGVVCAAILRRHVGPAEGANQWMNRLIAFASRGNHVSPTHYVPETDASKNVTQILTSLTITSLLRRLHQWVNEDTATPCATSWLRDVWDWVCTVLSDFKVWLQAKLFPRLPGIPFLSCQTGYRGVWAGDGVCHTTCTCGAVIAGHVKNGTMKITGPKTCSNTWHGTFPINATTTGPSTPRPAPNYQRALWRVSAEDYVEVRRLGDCHYVVGVTAEGLKCPCQVPAPEFFTEVDGVRIHRYAPPCKPLLRDEVTFSVGLSNYAIGSQLPCEPEPDVTVVTSMLTDPTHITAETASRRLKRGSPPSLASSSASQLSAPSLKATCTTSKDHPDMELIEANLLWRQEMGGNITRVESENKVVVLDSFEPLTAEYDEREISVSAECHRPPRHKFPPALPIWARPDYNPPLLQAWQMPGYEPPVVSGCAVAPPKPAPIPPPRRKRLVHLDESTVSRALAQLADKVFVEGSSDPGPSSDSGLSITSPDPPAPTTPDDACSEAESYSSMPPLEGEPGDPDLSSGSWSTVSDQDDVVCCSMSYSWTGALITPCAAEEEKLPINPLSNSLIRHHNMVYSTTSRSASLRQKKVTFDRLQVFDQHYQDVLKEIKLRASTVQARLLSIEEACDLTPSHSARSKYGYGAQDVRSHASKAINHIRSVWEDLLEDSDTPIPTTIMAKNEVFCVDPSKGGRKPARLIVYPDLGVRVCEKMALYDVTRKLPQAVMGSAYGFQYSPNQRVEYLLKMWRSKKVPMGFSYDTRCFDSTVTERDIRTENDIYQSCQLDPVARRAVSSLTERLYVGGPMVNSKGQSCGYRRCRASGVLPTSMGNTLTCYLKAQAACRAANIKDCDMLVCGDDLVVICESAGVQEDTASLRAFTDAMTRYSAPPGDVPQPTYDLELITSCSSNVSVAHDGNGKRYYYLTRDCTTPLARAAWETARHTPVNSWLGNIIMFAPTIWVRMVLMTHFFSILQSQEQLEKALDFDIYGVTYSVSPLDLPAIIQRLHGMAAFSLHGYSPTELNRVGACLRKLGVPPLRAWRHRARAVRAKLIAQGGKAAICGKYLFNWAVKTKLKLTPLVSASKLDLSGWFVAGYDGGDIYHSVSQARPRLLLLGLLLLTVGVGIFLVPAR.

Position 2 is an N-acetylserine; by host (Ser2). The interaction with STAT1 stretch occupies residues 2–23 (STLPKPQRKTKRNTNRRPMDVK). Residues 2–58 (STLPKPQRKTKRNTNRRPMDVKFPGGGQIVGGVYLLPRRGPRLGVRATRKTSERSQP) form an interaction with EIF2AK2/PKR region. The tract at residues 2–59 (STLPKPQRKTKRNTNRRPMDVKFPGGGQIVGGVYLLPRRGPRLGVRATRKTSERSQPR) is interaction with DDX3X. Positions 2 to 75 (STLPKPQRKT…PKARQPQGRH (74 aa)) are disordered. At 2–168 (STLPKPQRKT…EDGINYATGN (167 aa)) the chain is on the cytoplasmic side. 2 short sequence motifs (nuclear localization signal) span residues 5–13 (PKPQRKTKR) and 38–43 (PRRGPR). The segment covering 7 to 16 (PQRKTKRNTN) has biased composition (basic residues). A compositionally biased stretch (low complexity) spans 32–47 (GGVYLLPRRGPRLGVR). Ser53 is modified (phosphoserine; by host). 2 consecutive short sequence motifs (nuclear localization signal) follow at residues 58–64 (PRGRRQP) and 66–71 (PKARQP). Ser99 is subject to Phosphoserine; by host. The interval 112 to 152 (PRRRSRNLGKVIDTLTCGFADLMGYIPVVGAPLGGVAAALA) is important for endoplasmic reticulum and mitochondrial localization. Ser116 is subject to Phosphoserine; by host PKA. Residues 122–173 (VIDTLTCGFADLMGYIPVVGAPLGGVAAALAHGVRAIEDGINYATGNLPGCS) form an interaction with APOA2 region. The interval 164–167 (YATG) is important for lipid droplets localization. Residues 169 to 189 (LPGCSFSIFLLALLSCLTTPA) form a helical membrane-spanning segment. Positions 178–191 (LLALLSCLTTPASA) are cleaved as a propeptide — ER anchor for the core protein, removed in mature form by host signal peptidase. Residues 190 to 358 (SALTYGNSSG…FGGHWGILLA (169 aa)) are Lumenal-facing. N-linked (GlcNAc...) asparagine; by host glycosylation is found at Asn196, Asn209, Asn234, and Asn250. Residues 265 to 296 (LAGAAVVCSSLYIGDLCGSLFLAGQLFTFQPR) form an important for fusion region. Asn305 is a glycosylation site (N-linked (GlcNAc...) asparagine; by host). A helical transmembrane segment spans residues 359-379 (VAYFGMAGNWLKVLAVLFLFA). Residues 380–730 (GVEATTTVGH…WEYIVLMFLV (351 aa)) lie on the Lumenal side of the membrane. Positions 385–411 (TTVGHGVARTTAGITGLFSPGASQNLQ) are HVR1. N-linked (GlcNAc...) asparagine; by host glycosylation occurs at Asn415. N-linked (GlcNAc...) (high mannose) asparagine; by host glycans are attached at residues Asn422 and Asn429. 4 disulfide bridges follow: Cys428-Cys553, Cys451-Cys458, Cys487-Cys495, and Cys504-Cys509. N-linked (GlcNAc...) asparagine; by host glycosylation is present at Asn447. Residues 474 to 479 (KVNISG) form an HVR2 region. The N-linked (GlcNAc...) asparagine; by host glycan is linked to Asn476. The tract at residues 481 to 494 (SDDRPYCWHYAPRP) is CD81-binding 1. Residue Asn533 is glycosylated (N-linked (GlcNAc...) asparagine; by host). The segment at 545-552 (PPTGGWFG) is CD81-binding 2. A glycan (N-linked (GlcNAc...) asparagine; by host) is linked at Asn557. An intrachain disulfide couples Cys565 to Cys570. The N-linked (GlcNAc...) asparagine; by host glycan is linked to Asn578. 3 disulfide bridges follow: Cys586–Cys590, Cys602–Cys625, and Cys612–Cys649. N-linked (GlcNAc...) (high mannose) asparagine; by host glycosylation is found at Asn628 and Asn650. A disulfide bridge links Cys657 with Cys682. Residues 665–676 (IEMSPLLFSTTQ) form a PKR/eIF2-alpha phosphorylation homology domain (PePHD) region. Residues 731–751 (LADARICTCLWLMLLISNVEA) traverse the membrane as a helical segment. The Lumenal portion of the chain corresponds to 752–762 (AVERLVVLNAA). Residues 763 to 783 (SAAGTAGWWWAVLFLCCVWYV) traverse the membrane as a helical segment. The Cytoplasmic segment spans residues 784-786 (KGR). Residues 787–808 (LVPACTYMALGMWPLLLTILAL) form a helical membrane-spanning segment. The Lumenal portion of the chain corresponds to 809–818 (PHRAYAMDNE). The helical transmembrane segment at 819–839 (QAASLGAVGLLAITIFTITPT) threads the bilayer. Residues 840 to 843 (YKKL) are Cytoplasmic-facing. The chain crosses the membrane as a helical span at residues 844-863 (LTCFIWWNQYFLARAEAMVH). At 864-886 (EWVPDLRVRGGRDSIILLTCLLH) the chain is on the lumenal side. Residues 887–907 (PQLGFEVTKILLAILAPLYIL) form a helical membrane-spanning segment. Residues 908 to 1031 (QYSLLKVPYF…DMQRGGWKLL (124 aa)) enclose the Peptidase C18 domain. Residues 908-1662 (QYSLLKVPYF…CMSADLEVIT (755 aa)) lie on the Cytoplasmic side of the membrane. The interval 909–1211 (YSLLKVPYFV…PVENMETTMR (303 aa)) is protease NS2-3. Residue Cys927 is the site of S-palmitoyl cysteine; by host attachment. The interaction with host SCPS1 stretch occupies residues 934–954 (AGGRYVQACLLRLGAWTGTFI). Catalysis depends on for protease NS2 activity; shared with dimeric partner residues His957, Glu977, and Cys998. Residues 1032-1213 (APITAYAQQT…ENMETTMRSP (182 aa)) enclose the Peptidase S29 domain. Residues His1088 and Asp1112 each act as charge relay system; for serine protease NS3 activity in the active site. Zn(2+) contacts are provided by Cys1128 and Cys1130. Catalysis depends on Ser1170, which acts as the Charge relay system; for serine protease NS3 activity. Zn(2+) contacts are provided by Cys1176 and His1180. Residues 1222–1374 (PAVPQTYQVG…PNITETALPT (153 aa)) form the Helicase ATP-binding domain. 1235-1242 (APTGSGKS) is an ATP binding site. Residues Ser1242 and Glu1322 each contribute to the Mg(2+) site. Positions 1321 to 1324 (DECH) match the DECH box motif. The RNA-binding stretch occupies residues 1491-1503 (QRRGRTGRGKPGV). A helical transmembrane segment spans residues 1663 to 1683 (STWVLVGGVLAALAAYCLSVG). Residues 1684–1695 (CVVICGRITLTG) form an NS3-binding region. At 1684 to 1810 (CVVICGRITL…SLTSPLRTSQ (127 aa)) the chain is on the cytoplasmic side. A helical membrane pass occupies residues 1811–1829 (TLLLNILGGWIAAQVAPPP). The Lumenal portion of the chain corresponds to 1830-1833 (ASTA). The chain crosses the membrane as a helical span at residues 1834-1854 (FVVSGLAGAAVGSIRLGRVLV). Residue Asp1855 is a topological domain, cytoplasmic. Residues 1856 to 1876 (VLAGYGAGVSGALVAFKIMSG) form a helical membrane-spanning segment. At 1877–1886 (DCPTTEDMVN) the chain is on the lumenal side. The helical transmembrane segment at 1887 to 1907 (LLPALLSPGALVVGVVCAAIL) threads the bilayer. The Cytoplasmic segment spans residues 1908–1977 (RRHVGPAEGA…WVNEDTATPC (70 aa)). The S-palmitoyl cysteine; by host moiety is linked to residue Cys1977. Residues 1978–2007 (ATSWLRDVWDWVCTVLSDFKVWLQAKLFPR) lie within the membrane without spanning it. At 2008–2998 (LPGIPFLSCQ…YHSVSQARPR (991 aa)) the chain is on the cytoplasmic side. Positions 2016, 2034, 2036, and 2057 each coordinate Zn(2+). Positions 2125-2213 (EFFTEVDGVR…ASSSASQLSA (89 aa)) are FKBP8-binding. Residues 2125–2338 (EFFTEVDGVR…PIPPPRRKRL (214 aa)) are transcriptional activation. The segment at 2140–2144 (PPCKP) is interaction with non-structural protein 4A. The segment at 2189–2223 (ETASRRLKRGSPPSLASSSASQLSAPSLKATCTTS) is disordered. Residues 2194 to 2446 (RLKRGSPPSL…ALITPCAAEE (253 aa)) form an interaction with host SKP2 region. Ser2199 is subject to Phosphoserine; by host; in p56. Residues 2199 to 2216 (SPPSLASSSASQLSAPSL) are compositionally biased toward low complexity. Ser2202, Ser2206, Ser2209, Ser2212, and Ser2215 each carry phosphoserine; by host; in p58. An ISDR region spans residues 2215–2254 (SLKATCTTSKDHPDMELIEANLLWRQEMGGNITRVESENK). An interaction with EIF2AK2/PKR region spans residues 2215–2280 (SLKATCTTSK…REISVSAECH (66 aa)). The NS4B-binding stretch occupies residues 2254–2312 (KVVVLDSFEPLTAEYDEREISVSAECHRPPRHKFPPALPIWARPDYNPPLLQAWQMPGY). The segment at 2305–2383 (QAWQMPGYEP…SITSPDPPAP (79 aa)) is V3. Positions 2328-2331 (APIP) match the SH3-binding motif. The Nuclear localization signal motif lies at 2333 to 2341 (PRRKRLVHL). A Glycyl lysine isopeptide (Lys-Gly) (interchain with G-Cter in ubiquitin) cross-link involves residue Lys2356. Residues 2359-2418 (VEGSSDPGPSSDSGLSITSPDPPAPTTPDDACSEAESYSSMPPLEGEPGDPDLSSGSWST) form a disordered region. The span at 2361–2372 (GSSDPGPSSDSG) shows a compositional bias: low complexity. Residues Ser2457 and Ser2470 each carry the phosphoserine; by host modification. Positions 2642 to 2760 (PMGFSYDTRC…ICESAGVQED (119 aa)) constitute a RdRp catalytic domain. Mg(2+) is bound by residues Asp2648, Asp2746, and Asp2747. The helical transmembrane segment at 2999–3019 (LLLLGLLLLTVGVGIFLVPAR) threads the bilayer.

Belongs to the hepacivirus polyprotein family. In terms of assembly, homooligomer. Interacts with E1 (via C-terminus). Interacts with the non-structural protein 5A. Interacts (via N-terminus) with host STAT1 (via SH2 domain); this interaction results in decreased STAT1 phosphorylation and ubiquitin-mediated proteasome-dependent STAT1 degradation, leading to decreased IFN-stimulated gene transcription. Interacts with host STAT3; this interaction constitutively activates STAT3. Interacts with host LTBR receptor. Interacts with host TNFRSF1A receptor and possibly induces apoptosis. Interacts with host HNRPK. Interacts with host YWHAE. Interacts with host UBE3A/E6AP. Interacts with host DDX3X. Interacts with host APOA2. Interacts with host RXRA protein. Interacts with host SP110 isoform 3/Sp110b; this interaction sequesters the transcriptional corepressor SP110 away from the nucleus. Interacts with host CREB3 nuclear transcription protein; this interaction triggers cell transformation. Interacts with host ACY3. Interacts with host C1QR1. Interacts with host RBM24; this interaction, which enhances the interaction of the mature core protein with 5'-UTR, may inhibit viral translation and favor replication. Interacts with host EIF2AK2/PKR; this interaction induces the autophosphorylation of EIF2AK2. Part of the viral assembly initiation complex composed of NS2, E1, E2, NS3, NS4A, NS5A and the mature core protein. As to quaternary structure, forms a heterodimer with envelope glycoprotein E2. Interacts with mature core protein. Interacts with protease NS2. The heterodimer E1/E2 interacts with host CLDN1; this interaction plays a role in viral entry into host cell. Interacts with host SPSB2 (via C-terminus). Part of the viral assembly initiation complex composed of NS2, E1, E2, NS3, NS4A, NS5A and the mature core protein. Interacts with host NEURL3; this interaction prevents E1 binding to glycoprotein E2. Forms a heterodimer with envelope glycoprotein E1. Interacts with host CD81 and SCARB1 receptors; these interactions play a role in viral entry into host cell. Interacts with host EIF2AK2/PKR; this interaction inhibits EIF2AK2 and probably allows the virus to evade the innate immune response. Interacts with host CD209/DC-SIGN and CLEC4M/DC-SIGNR. Interact with host SPCS1; this interaction is essential for viral particle assembly. Interacts with protease NS2. The heterodimer E1/E2 interacts with host CLDN1; this interaction plays a role in viral entry into host cell. Part of the viral assembly initiation complex composed of NS2, E1, E2, NS3, NS4A, NS5A and the mature core protein. Interacts with host SLC3A2/4F2hc; the interaction may facilitate viral entry into host cell. Interacts with human PLSCR1. In terms of assembly, homohexamer. Homoheptamer. Interacts with protease NS2. As to quaternary structure, homodimer. Interacts with host SPCS1; this interaction is essential for viral particle assembly. Interacts with envelope glycoprotein E1. Interacts with envelope glycoprotein E2. Interacts with viroporin p7. Interacts with serine protease/helicase NS3. Part of the replication complex composed of NS2, NS3, NS4A, NS4B, NS5A and the RNA-directed RNA polymerase embedded in an ER-derived membranous web. Part of the viral assembly initiation complex composed of NS2, E1, E2, NS3, NS4A, NS5A and the mature core protein. Interacts with protease NS2. Interacts with non-structural protein 4A; this interaction stabilizes the folding of NS3 serine protease. NS3-NS4A interaction is essential for NS3 activation and allows membrane anchorage of the latter. NS3/NS4A complex also prevents phosphorylation of host IRF3, thus preventing the establishment of dsRNA induced antiviral state. Interacts with host MAVS; this interaction leads to the cleavage and inhibition of host MAVS. Interacts with host TICAM1; this interaction leads to the cleavage and inhibition of host TICAM1. Interacts with host TANK-binding kinase/TBK1; this interaction results in the inhibition of the association between TBK1 and IRF3, which leads to the inhibition of IRF3 activation. Interacts with host RBM24. Part of the replication complex composed of NS2, NS3, NS4A, NS4B, NS5A and the RNA-directed RNA polymerase embedded in an ER-derived membranous web. Part of the viral assembly initiation complex composed of NS2, E1, E2, NS3, NS4A, NS5A and the mature core protein. In terms of assembly, interacts with NS3 serine protease; this interaction stabilizes the folding of NS3 serine protease. NS3-NS4A interaction is essential for NS3 activation and allows membrane anchorage of the latter. Interacts with non-structural protein 5A (via N-terminus). Part of the replication complex composed of NS2, NS3, NS4A, NS4B, NS5A and the RNA-directed RNA polymerase embedded in an ER-derived membranous web. Part of the viral assembly initiation complex composed of NS2, E1, E2, NS3, NS4A, NS5A and the mature core protein. As to quaternary structure, homomultimer. Interacts with non-structural protein NS5A. Interacts with host PLA2G4C; this interaction likely initiates the recruitment of replication complexes to lipid droplets. Interacts with host STING; this interaction disrupts the interaction between STING and TBK1 thereby suppressing the interferon signaling. Part of the replication complex composed of NS2, NS3, NS4A, NS4B, NS5A and the RNA-directed RNA polymerase embedded in an ER-derived membranous web. Monomer. Homodimer; dimerization is required for RNA-binding. Interacts with the mature core protein. Interacts (via N-terminus) with non-structural protein 4A. Interacts with non-structural protein 4B. Interacts (via region D2) with RNA-directed RNA polymerase. Part of the viral assembly initiation complex composed of NS2, E1, E2, NS3, NS4A, NS5A and the mature core protein. Part of the replication complex composed of NS2, NS3, NS4A, NS4B, NS5A and the RNA-directed RNA polymerase embedded in an ER-derived membranous web. Interacts with host GRB2. Interacts with host BIN1. Interacts with host PIK3R1. Interacts with host SRCAP. Interacts with host FKBP8. Interacts (via C-terminus) with host VAPB (via MSP domain). Interacts with host EIF2AK2/PKR; this interaction leads to disruption of EIF2AK2 dimerization by NS5A and probably allows the virus to evade the innate immune response. Interacts (via N-terminus) with host PACSIN2 (via N-terminus); this interaction attenuates protein kinase C alpha-mediated phosphorylation of PACSIN2 by disrupting the interaction between PACSIN2 and PRKCA. Interacts (via N-terminus) with host SRC kinase (via SH2 domain). Interacts with most Src-family kinases. Interacts with host IFI27 and SKP2; promotes the ubiquitin-mediated proteasomal degradation of NS5A. Interacts with host GPS2. Interacts with host TNFRSF21; this interaction allows the modulation by the virus of JNK, p38 MAPK, STAT3, and Akt signaling pathways in a DR6-dependent manner. Interacts (via N-terminus) with host CIDEB (via N-terminus); this interaction seems to regulate the association of HCV particles with APOE. Interacts with host CHKA/Choline Kinase-alpha; CHKA bridges host PI4KA and NS5A and potentiates NS5A-stimulated PI4KA activity, which then facilitates the targeting of the ternary complex to the ER for viral replication. Interacts with host SPSB2 (via C-terminus); this interaction targets NS5A for ubiquitination and degradation. Interacts with host RAB18; this interaction may promote the association of NS5A and other replicase components with lipid droplets. Interacts (via region D2) with host PPIA/CYPA; the interaction stimulates RNA-binding ability of NS5A and is dependent on the peptidyl-prolyl cis-trans isomerase activity of PPIA/CYPA. Interacts with host TRIM14; this interaction induces the degradation of NS5A. In terms of assembly, homooligomer. Interacts with non-structural protein 5A. Interacts with host VAPB. Interacts with host PRK2/PKN2. Interacts with host HNRNPA1 and SEPT6; these interactions facilitate viral replication. Part of the replication complex composed of NS2, NS3, NS4A, NS4B, NS5A and the RNA-directed RNA polymerase. Requires Zn(2+) as cofactor. Mg(2+) is required as a cofactor. Specific enzymatic cleavages in vivo yield mature proteins. The structural proteins, core, E1, E2 and p7 are produced by proteolytic processing by host signal peptidases. The core protein precursor is synthesized as a 23 kDa, which is retained in the ER membrane through the hydrophobic signal peptide. Cleavage by the signal peptidase releases the 21 kDa mature core protein. The cleavage of the core protein precursor occurs between aminoacids 176 and 188 but the exact cleavage site is not known. Some degraded forms of the core protein appear as well during the course of infection. The other proteins (p7, NS2, NS3, NS4A, NS4B, NS5A and NS5B) are cleaved by the viral proteases. Autoprocessing between NS2 and NS3 is mediated by the NS2 cysteine protease catalytic domain and regulated by the NS3 N-terminal domain. In terms of processing, phosphorylated by host PKC and PKA. Post-translationally, ubiquitinated; mediated by UBE3A and leading to core protein subsequent proteasomal degradation. Highly N-glycosylated. In terms of processing, palmitoylation is required for NS2/3 autoprocessing and E2 recruitment to membranes. Post-translationally, palmitoylated. This modification may play a role in its polymerization or in protein-protein interactions. Phosphorylated on serines in a basal form termed p56. p58 is a hyperphosphorylated form of p56. p56 and p58 coexist in the cell in roughly equivalent amounts. Hyperphosphorylation is dependent on the presence of NS4A. Host CSNK1A1/CKI-alpha or RPS6KB1 kinases may be responsible for NS5A phosphorylation. In terms of processing, tyrosine phosphorylation is essential for the interaction with host SRC. Post-translationally, the N-terminus is phosphorylated by host PRK2/PKN2.

The protein localises to the host endoplasmic reticulum membrane. The protein resides in the host mitochondrion membrane. It localises to the virion. It is found in the host cytoplasm. Its subcellular location is the host nucleus. The protein localises to the host lipid droplet. The protein resides in the virion membrane. It localises to the host mitochondrion. It is found in the host cell membrane. Its subcellular location is the host perinuclear region. The catalysed reaction is Hydrolysis of four peptide bonds in the viral precursor polyprotein, commonly with Asp or Glu in the P6 position, Cys or Thr in P1 and Ser or Ala in P1'.. It carries out the reaction a ribonucleoside 5'-triphosphate + H2O = a ribonucleoside 5'-diphosphate + phosphate + H(+). It catalyses the reaction ATP + H2O = ADP + phosphate + H(+). The enzyme catalyses RNA(n) + a ribonucleoside 5'-triphosphate = RNA(n+1) + diphosphate. With respect to regulation, inhibited by the antiviral drug hexamethylene amiloride. Inhibition by amantadine appears to be genotype-dependent. Also inhibited by long-alkyl-chain iminosugar derivatives. Activity is up-regulated by PRK2/PKN2-mediated phosphorylation. Packages viral RNA to form a viral nucleocapsid, and promotes virion budding. Participates in the viral particle production as a result of its interaction with the non-structural protein 5A. Binds RNA and may function as a RNA chaperone to induce the RNA structural rearrangements taking place during virus replication. Modulates viral translation initiation by interacting with viral IRES and 40S ribosomal subunit. Affects various cell signaling pathways, host immunity and lipid metabolism. Prevents the establishment of cellular antiviral state by blocking the interferon-alpha/beta (IFN-alpha/beta) and IFN-gamma signaling pathways and by blocking the formation of phosphorylated STAT1 and promoting ubiquitin-mediated proteasome-dependent degradation of STAT1. Activates STAT3 leading to cellular transformation. Regulates the activity of cellular genes, including c-myc and c-fos. May repress the promoter of p53, and sequester CREB3 and SP110 isoform 3/Sp110b in the cytoplasm. Represses cell cycle negative regulating factor CDKN1A, thereby interrupting an important check point of normal cell cycle regulation. Targets transcription factors involved in the regulation of inflammatory responses and in the immune response: suppresses TNF-induced NF-kappa-B activation, and activates AP-1. Binds to dendritic cells (DCs) via C1QR1, resulting in down-regulation of T-lymphocytes proliferation. Alters lipid metabolism by interacting with hepatocellular proteins involved in lipid accumulation and storage. Induces up-regulation of FAS promoter activity, and thereby contributes to the increased triglyceride accumulation in hepatocytes (steatosis). Functionally, forms a heterodimer with envelope glycoprotein E2, which mediates virus attachment to the host cell, virion internalization through clathrin-dependent endocytosis and fusion with host membrane. Fusion with the host cell is most likely mediated by both E1 and E2, through conformational rearrangements of the heterodimer required for fusion rather than a classical class II fusion mechanism. E1/E2 heterodimer binds host apolipoproteins such as APOB and ApoE thereby forming a lipo-viro-particle (LVP). APOE associated to the LVP allows the initial virus attachment to cell surface receptors such as the heparan sulfate proteoglycans (HSPGs), syndecan-1 (SDC1), syndecan-1 (SDC2), the low-density lipoprotein receptor (LDLR) and scavenger receptor class B type I (SCARB1). The cholesterol transfer activity of SCARB1 allows E2 exposure and binding of E2 to SCARB1 and the tetraspanin CD81. E1/E2 heterodimer binding on CD81 activates the epithelial growth factor receptor (EGFR) signaling pathway. Diffusion of the complex E1-E2-EGFR-SCARB1-CD81 to the cell lateral membrane allows further interaction with Claudin 1 (CLDN1) and occludin (OCLN) to finally trigger HCV entry. Its function is as follows. Forms a heterodimer with envelope glycoprotein E1, which mediates virus attachment to the host cell, virion internalization through clathrin-dependent endocytosis and fusion with host membrane. Fusion with the host cell is most likely mediated by both E1 and E2, through conformational rearrangements of the heterodimer required for fusion rather than a classical class II fusion mechanism. The interaction between envelope glycoprotein E2 and host apolipoprotein E/APOE allows the proper assembly, maturation and infectivity of the viral particles. This interaction is probably promoted via the up-regulation of cellular autophagy by the virus. E1/E2 heterodimer binds host apolipoproteins such as APOB and APOE thereby forming a lipo-viro-particle (LVP). APOE associated to the LVP allows the initial virus attachment to cell surface receptors such as the heparan sulfate proteoglycans (HSPGs), syndecan-1 (SDC1), syndecan-1 (SDC2), the low-density lipoprotein receptor (LDLR) and scavenger receptor class B type I (SCARB1). The cholesterol transfer activity of SCARB1 allows E2 exposure and binding of E2 to SCARB1 and the tetraspanin CD81. E1/E2 heterodimer binding on CD81 activates the epithelial growth factor receptor (EGFR) signaling pathway. Diffusion of the complex E1-E2-EGFR-SCARB1-CD81 to the cell lateral membrane allows further interaction with Claudin 1 (CLDN1) and occludin (OCLN) to finally trigger HCV entry. Inhibits host EIF2AK2/PKR activation, preventing the establishment of an antiviral state. Viral ligand for CD209/DC-SIGN and CLEC4M/DC-SIGNR, which are respectively found on dendritic cells (DCs), and on liver sinusoidal endothelial cells and macrophage-like cells of lymph node sinuses. These interactions allow the capture of circulating HCV particles by these cells and subsequent facilitated transmission to permissive cells such as hepatocytes and lymphocyte subpopulations. The interaction between E2 and host amino acid transporter complex formed by SLC3A2 and SLC7A5/LAT1 may facilitate viral entry into host cell. In terms of biological role, ion channel protein that acts as a viroporin and plays an essential role in the assembly, envelopment and secretion of viral particles. Regulates the host cell secretory pathway, which induces the intracellular retention of viral glycoproteins and favors assembly of viral particles. Creates a pore in acidic organelles and releases Ca(2+) and H(+) in the cytoplasm of infected cells, leading to a productive viral infection. High levels of cytoplasmic Ca(2+) may trigger membrane trafficking and transport of viral ER-associated proteins to viroplasms, sites of viral genome replication. This ionic imbalance induces the assembly of the inflammasome complex, which triggers the maturation of pro-IL-1beta into IL-1beta through the action of caspase-1. Targets also host mitochondria and induces mitochondrial depolarization. In addition of its role as a viroporin, acts as a lipid raft adhesion factor. Cysteine protease required for the proteolytic auto-cleavage between the non-structural proteins NS2 and NS3. The N-terminus of NS3 is required for the function of NS2 protease (active region NS2-3). Promotes the initiation of viral particle assembly by mediating the interaction between structural and non-structural proteins. Functionally, displays three enzymatic activities: serine protease with a chymotrypsin-like fold, NTPase and RNA helicase. NS3 serine protease, in association with NS4A, is responsible for the cleavages of NS3-NS4A, NS4A-NS4B, NS4B-NS5A and NS5A-NS5B. The NS3/NS4A complex prevents phosphorylation of host IRF3, thus preventing the establishment of dsRNA induced antiviral state. The NS3/NS4A complex induces host amino acid transporter component SLC3A2, thus contributing to HCV propagation. NS3 RNA helicase binds to RNA and unwinds both dsDNA and dsRNA in the 3' to 5' direction, and likely resolves RNA complicated stable secondary structures in the template strand. Binds a single ATP and catalyzes the unzipping of a single base pair of dsRNA. Inhibits host antiviral proteins TBK1 and IRF3 thereby preventing the establishment of an antiviral state. Cleaves host MAVS/CARDIF thereby preventing the establishment of an antiviral state. Cleaves host TICAM1/TRIF, thereby disrupting TLR3 signaling and preventing the establishment of an antiviral state. Its function is as follows. Induces a specific membrane alteration that serves as a scaffold for the virus replication complex. This membrane alteration gives rise to the so-called ER-derived membranous web that contains the replication complex. NS4B self-interaction contributes to its function in membranous web formation. Promotes host TRIF protein degradation in a CASP8-dependent manner thereby inhibiting host TLR3-mediated interferon signaling. Disrupts the interaction between STING and TBK1 contributing to the inhibition of interferon signaling. In terms of biological role, phosphorylated protein that is indispensable for viral replication and assembly. Both hypo- and hyperphosphorylated states are required for the viral life cycle. The hyperphosphorylated form of NS5A is an inhibitor of viral replication. Involved in RNA-binding and especially in binding to the viral genome. Zinc is essential for RNA-binding. Participates in the viral particle production as a result of its interaction with the mature viral core protein. Its interaction with host VAPB may target the viral replication complex to vesicles. Down-regulates viral IRES translation initiation. Mediates interferon resistance, presumably by interacting with and inhibiting host EIF2AK2/PKR. Prevents BIN1-induced apoptosis. Acts as a transcriptional activator of some host genes important for viral replication when localized in the nucleus. Via the interaction with host PACSIN2, modulates lipid droplet formation in order to promote virion assembly. Modulates TNFRSF21/DR6 signaling pathway for viral propagation. RNA-dependent RNA polymerase that performs primer-template recognition and RNA synthesis during viral replication. Initiates RNA transcription/replication at a flavin adenine dinucleotide (FAD), resulting in a 5'- FAD cap on viral RNAs. In this way, recognition of viral 5' RNA by host pattern recognition receptors can be bypassed, thereby evading activation of antiviral pathways. The protein is Genome polyprotein of Hepatitis C virus genotype 6a (isolate 6a33) (HCV).